The chain runs to 633 residues: ATP-dependent zinc metalloprotease FtsH (633 aa).

Topologically, residues 1–19 (MTPSNEPGKQDQIPQPGPT) are cytoplasmic. The helical transmembrane segment at 20–40 (IPNQYSFLWLSAAIFLMFLWL) threads the bilayer. The Periplasmic portion of the chain corresponds to 41–133 (QGNNQQQQQE…SRSGRPWWQE (93 aa)). The chain crosses the membrane as a helical span at residues 134-154 (LILGFLPWILLLALMFWFWGA). Residues 155–633 (AQKRMTQGGG…LEEARSRETA (479 aa)) lie on the Cytoplasmic side of the membrane. 226–233 (GPPGTGKT) contributes to the ATP binding site. His-447 contacts Zn(2+). The active site involves Glu-448. Residues His-451 and Asp-523 each coordinate Zn(2+).

The protein in the central section; belongs to the AAA ATPase family. In the C-terminal section; belongs to the peptidase M41 family. In terms of assembly, homohexamer. It depends on Zn(2+) as a cofactor.

The protein localises to the cell inner membrane. Its function is as follows. Acts as a processive, ATP-dependent zinc metallopeptidase for both cytoplasmic and membrane proteins. Plays a role in the quality control of integral membrane proteins. The sequence is that of ATP-dependent zinc metalloprotease FtsH from Marinobacter nauticus (strain ATCC 700491 / DSM 11845 / VT8) (Marinobacter aquaeolei).